The primary structure comprises 1417 residues: DNA-directed RNA polymerase subunit beta' (1417 aa).

Zn(2+) is bound by residues Cys71, Cys73, Cys86, and Cys89. The Mg(2+) site is built by Asp461, Asp463, and Asp465. Cys815, Cys889, Cys896, and Cys899 together coordinate Zn(2+).

This sequence belongs to the RNA polymerase beta' chain family. As to quaternary structure, the RNAP catalytic core consists of 2 alpha, 1 beta, 1 beta' and 1 omega subunit. When a sigma factor is associated with the core the holoenzyme is formed, which can initiate transcription. The cofactor is Mg(2+). Zn(2+) serves as cofactor.

It catalyses the reaction RNA(n) + a ribonucleoside 5'-triphosphate = RNA(n+1) + diphosphate. Functionally, DNA-dependent RNA polymerase catalyzes the transcription of DNA into RNA using the four ribonucleoside triphosphates as substrates. The sequence is that of DNA-directed RNA polymerase subunit beta' from Pasteurella multocida (strain Pm70).